Consider the following 201-residue polypeptide: MKHFLLLAIIGILFLGSTYGASVATEKLKASNCTKTEGFQAIACVLRMADFAQKIEKLDMDDKNQVNEFEKSCVSFANCFETLQCGPEDPAEKKINNMIKNYCDAVVYVAKDFADCSEKLENKNSTCYQNWDPFPDAIDEETDEKKKEKMLQEACKNYFGKDNCLKKEITEKCSETEWKGFRDHFIGISNILLECDFRNIQ.

Over 1–3 the chain is Cytoplasmic; the sequence is MKH. A helical; Signal-anchor for type II membrane protein transmembrane segment spans residues 4–24; it reads FLLLAIIGILFLGSTYGASVA. Residues 25–201 lie on the Extracellular side of the membrane; it reads TEKLKASNCT…LLECDFRNIQ (177 aa). Residues Asn32 and Asn124 are each glycosylated (N-linked (GlcNAc...) asparagine).

The protein belongs to the UPF0376 family.

It localises to the membrane. The polypeptide is UPF0376 protein F10G2.1 (Caenorhabditis elegans).